Reading from the N-terminus, the 520-residue chain is Retinoic acid receptor RXR-beta (520 aa).

Residues 1-167 (MSWATRPPFL…GGSGPPEDVK (167 aa)) are disordered. Residues 1-191 (MSWATRPPFL…PGGPGAGKRL (191 aa)) form a modulating region. Omega-N-methylarginine is present on Arg-25. Over residues 64-79 (EAGRDGMGDSGRDSRS) the composition is skewed to basic and acidic residues. Positions 95 to 118 (SSPPGPPLTPSAPPPPMPPPPLGS) are enriched in pro residues. Positions 119 to 130 (PFPVISSSMGSP) are enriched in low complexity. Pro residues predominate over residues 131 to 140 (GLPPPAPPGF). 2 consecutive NR C4-type zinc fingers follow at residues 192–212 (CAIC…CEGC) and 228–252 (CRDN…YQKC). A DNA-binding region (nuclear receptor) is located at residues 192–257 (CAICGDRSSG…RYQKCLATGM (66 aa)). The segment at 258–382 (KREAVQEERQ…HRSIDVRDGI (125 aa)) is hinge. The span at 263-275 (QEERQRGKDKDGD) shows a compositional bias: basic and acidic residues. Disordered stretches follow at residues 263 to 285 (QEER…APEE) and 300 to 323 (QKSD…NDPV). The NR LBD domain maps to 283-516 (PEEMPVDRIL…TFLMEMLEAP (234 aa)). Over residues 307–317 (EGPGATGGGGS) the composition is skewed to gly residues.

The protein belongs to the nuclear hormone receptor family. NR2 subfamily. Homodimer (in vitro). Heterodimer with other retinoic acid receptor family members. Binds DNA preferentially as a RAR/RXR heterodimer. Interacts with NR1H3. Interacts with AKAP13. In terms of tissue distribution, in all tissues tested, including brain, thymus, spleen and liver.

It is found in the nucleus. The protein resides in the cytoplasm. Receptor for retinoic acid. Retinoic acid receptors bind as heterodimers to their target response elements in response to their ligands, all-trans or 9-cis retinoic acid, and regulate gene expression in various biological processes. The RAR/RXR heterodimers bind to the retinoic acid response elements (RARE). The protein is Retinoic acid receptor RXR-beta (Rxrb) of Mus musculus (Mouse).